Reading from the N-terminus, the 456-residue chain is L-2-hydroxyglutarate dehydrogenase, mitochondrial (456 aa).

Residues 1–20 (MLKTSFLLSKRNAVSLSRVL) constitute a mitochondrion transit peptide.

The protein belongs to the L2HGDH family. Requires FAD as cofactor.

Its subcellular location is the mitochondrion. It carries out the reaction (S)-2-hydroxyglutarate + A = 2-oxoglutarate + AH2. The protein is L-2-hydroxyglutarate dehydrogenase, mitochondrial of Nematostella vectensis (Starlet sea anemone).